Reading from the N-terminus, the 302-residue chain is MNKIRCALIGPGNIGTDLLYKLRRSDILEPVWMVGVEPSSEGLARARELGLKTTSDGIDGLLPHLEADDIRIAFDATSAYVHAEHSARLTARGVRVIDLTPAAIGPFCVPPVNLDAHIGSNEMNVNMVTCGGQATIPMVYAVSRVQPVAYGEIVATVSSRSVGPGTRRNIDEFTRTTAGAIEAVGGARQGKAIIVINPAEPPLIMRDTIHCLTDDAPDVAAITASVHDMIAEVRKYVPGYTLKNGPVFDGKRVSIFLEVEGLGDYLPKYAGNLDIMTASAARTAECIAAAMRAGSAQESANA.

The Acyl-thioester intermediate role is filled by Cys130. NAD(+)-binding positions include 161–169 and Asn272; that span reads SVGPGTRRN.

The protein belongs to the acetaldehyde dehydrogenase family.

It catalyses the reaction acetaldehyde + NAD(+) + CoA = acetyl-CoA + NADH + H(+). The sequence is that of Acetaldehyde dehydrogenase 2 from Cupriavidus necator (strain ATCC 17699 / DSM 428 / KCTC 22496 / NCIMB 10442 / H16 / Stanier 337) (Ralstonia eutropha).